The primary structure comprises 333 residues: Holliday junction branch migration complex subunit RuvB (333 aa).

A large ATPase domain (RuvB-L) region spans residues 1 to 182 (MEERLVSGEV…FGVISRLEYY (182 aa)). Residues Leu-21, Arg-22, Gly-63, Lys-66, Thr-67, Thr-68, 129-131 (EDY), Arg-172, Tyr-182, and Arg-219 each bind ATP. Thr-67 contacts Mg(2+). Residues 183–253 (HVDQLAQIIE…LAVEALERLQ (71 aa)) are small ATPAse domain (RuvB-S). The tract at residues 256–333 (RLGLDQIDHK…THLGMEVPKR (78 aa)) is head domain (RuvB-H). Positions 311 and 316 each coordinate DNA.

The protein belongs to the RuvB family. As to quaternary structure, homohexamer. Forms an RuvA(8)-RuvB(12)-Holliday junction (HJ) complex. HJ DNA is sandwiched between 2 RuvA tetramers; dsDNA enters through RuvA and exits via RuvB. An RuvB hexamer assembles on each DNA strand where it exits the tetramer. Each RuvB hexamer is contacted by two RuvA subunits (via domain III) on 2 adjacent RuvB subunits; this complex drives branch migration. In the full resolvosome a probable DNA-RuvA(4)-RuvB(12)-RuvC(2) complex forms which resolves the HJ.

It localises to the cytoplasm. It carries out the reaction ATP + H2O = ADP + phosphate + H(+). In terms of biological role, the RuvA-RuvB-RuvC complex processes Holliday junction (HJ) DNA during genetic recombination and DNA repair, while the RuvA-RuvB complex plays an important role in the rescue of blocked DNA replication forks via replication fork reversal (RFR). RuvA specifically binds to HJ cruciform DNA, conferring on it an open structure. The RuvB hexamer acts as an ATP-dependent pump, pulling dsDNA into and through the RuvAB complex. RuvB forms 2 homohexamers on either side of HJ DNA bound by 1 or 2 RuvA tetramers; 4 subunits per hexamer contact DNA at a time. Coordinated motions by a converter formed by DNA-disengaged RuvB subunits stimulates ATP hydrolysis and nucleotide exchange. Immobilization of the converter enables RuvB to convert the ATP-contained energy into a lever motion, pulling 2 nucleotides of DNA out of the RuvA tetramer per ATP hydrolyzed, thus driving DNA branch migration. The RuvB motors rotate together with the DNA substrate, which together with the progressing nucleotide cycle form the mechanistic basis for DNA recombination by continuous HJ branch migration. Branch migration allows RuvC to scan DNA until it finds its consensus sequence, where it cleaves and resolves cruciform DNA. The polypeptide is Holliday junction branch migration complex subunit RuvB (Geobacillus kaustophilus (strain HTA426)).